The following is a 213-amino-acid chain: Thymidylate kinase (213 aa).

10–17 (GPDGAGKT) is an ATP binding site.

Belongs to the thymidylate kinase family.

The catalysed reaction is dTMP + ATP = dTDP + ADP. Phosphorylation of dTMP to form dTDP in both de novo and salvage pathways of dTTP synthesis. The polypeptide is Thymidylate kinase (Limosilactobacillus reuteri (strain DSM 20016) (Lactobacillus reuteri)).